The following is a 219-amino-acid chain: MSDYITFALPKGRIMRDSMELFAKIGITCPEMSGDSRKLVFENPETKFRFMAVRATDVPTYVEYGCADLGVVGKDTLLEQGKDLYEPLDLKFGYCRLVVAEPGELSRDEDPADWSNIRVATKYPNITERYFAERGVQVELIKLYGSIELAPLVGLAERIVDLVSTGATMRDNGLVEVETIGEITSRLIVNRASLKTKHQRITRIIQDLERVLAEDAGND.

The protein belongs to the ATP phosphoribosyltransferase family. Short subfamily. In terms of assembly, heteromultimer composed of HisG and HisZ subunits.

The protein localises to the cytoplasm. It catalyses the reaction 1-(5-phospho-beta-D-ribosyl)-ATP + diphosphate = 5-phospho-alpha-D-ribose 1-diphosphate + ATP. It functions in the pathway amino-acid biosynthesis; L-histidine biosynthesis; L-histidine from 5-phospho-alpha-D-ribose 1-diphosphate: step 1/9. Catalyzes the condensation of ATP and 5-phosphoribose 1-diphosphate to form N'-(5'-phosphoribosyl)-ATP (PR-ATP). Has a crucial role in the pathway because the rate of histidine biosynthesis seems to be controlled primarily by regulation of HisG enzymatic activity. The sequence is that of ATP phosphoribosyltransferase from Syntrophotalea carbinolica (strain DSM 2380 / NBRC 103641 / GraBd1) (Pelobacter carbinolicus).